A 528-amino-acid chain; its full sequence is Peptide chain release factor 3 (528 aa).

The tr-type G domain occupies 9–280 (RRRRTFAIIS…LKLAPAPAPR (272 aa)). Residues 18 to 25 (SHPDAGKT), 86 to 90 (DTPGH), and 140 to 143 (NKLD) contribute to the GTP site.

Belongs to the TRAFAC class translation factor GTPase superfamily. Classic translation factor GTPase family. PrfC subfamily.

It localises to the cytoplasm. Increases the formation of ribosomal termination complexes and stimulates activities of RF-1 and RF-2. It binds guanine nucleotides and has strong preference for UGA stop codons. It may interact directly with the ribosome. The stimulation of RF-1 and RF-2 is significantly reduced by GTP and GDP, but not by GMP. This is Peptide chain release factor 3 from Symbiobacterium thermophilum (strain DSM 24528 / JCM 14929 / IAM 14863 / T).